The sequence spans 264 residues: Accessory gland-specific peptide 26Aa (264 aa).

The N-terminal stretch at 1 to 18 (MNQILLCSPILLLLFTVA) is a signal peptide. A sufficient for promoting ovulation when expressed in females region spans residues 1–138 (MNQILLCSPI…LQQRLLTEQN (138 aa)). N-linked (GlcNAc...) asparagine glycans are attached at residues asparagine 88, asparagine 122, asparagine 138, and asparagine 145. A disordered region spans residues 189–219 (LQNTRKSTKPCKKRSSKDSAPPAANQFQEAN). The span at 194-203 (KSTKPCKKRS) shows a compositional bias: basic residues. Positions 219 to 264 (NVRNTYRNKYLTLLKELSQKINNEIAKVATDVPTETNPSQGNLPTL) are necessary and sufficient for homodimerization.

In terms of assembly, homodimer. May form a homodimer. Post-translationally, glycosylation. Undergoes several cleavages as it is secreted and is further processed in the recipient female. The precursor molecule is proteolytically cleaved by the seminal metalloprotease Semp1 at Lys-48 to produce CP1-N and CP1-C. In terms of processing, cleaved at Lys-67 by Semp1 to generate CP2-N and CP2-C. Cleavage appears to take place in the mated female genital tract. Post-translationally, cleaved at Lys-117 by Semp1 to generate CP3-N and CP3-C. Cleavage appears to take place in the mated female genital tract. As to expression, produced in the male accessory glands and secreted into seminal fluid (at protein level). Detected in the main cells and secondary cells of the accessory glands of 1 day old males (at protein level). In 5 day old males, confined to the secondary cells and only reappears in the main cells after mating (at protein level). Produced in adult males 3-4 hr after eclosion, levels increase reaching a peak at day 3-5 which is maintained until at least day 10 of adulthood (at protein level). In unmated male adults, levels are maintained for the first 6 days of adulthood and then gradually decrease for at least the next 8 days. In mated females, detected in the genital tract 3 minutes after the start of mating (ASM) and is secreted into the female hemolymph via the posterior vaginal wall 5 minutes ASM (at protein level).

The protein resides in the secreted. It localises to the cytoplasm. Functionally, male seminal protein which enhances ovulation in female Drosophila by stimulating the release of oocytes by the ovary following mating. Acts by increasing octopamine (OA) neuronal signaling in the female genital tract leading to the postmating relaxation of the oviduct muscles. This activation of the OA signaling pathway is likely to indirectly contribute to the mating-dependent increase in the number of OA synaptic sites in the female reproductive tract. Its function is as follows. Male seminal peptide which is able to enhance ovulation in female Drosophila. The sequence is that of Accessory gland-specific peptide 26Aa from Drosophila melanogaster (Fruit fly).